The primary structure comprises 237 residues: Thrombin-like enzyme agkihpin-2 (237 aa).

A propeptide is located at residue methionine 1. Residues 2-228 (ILGDDECNIN…HLDWIENIIA (227 aa)) enclose the Peptidase S1 domain. Cysteine 27 and cysteine 43 are disulfide-bonded. Histidine 42 (charge relay system) is an active-site residue. A glycan (N-linked (GlcNAc...) asparagine) is linked at asparagine 80. Residue aspartate 87 is the Charge relay system of the active site. 3 disulfide bridges follow: cysteine 119–cysteine 189, cysteine 151–cysteine 168, and cysteine 179–cysteine 204. Serine 183 (charge relay system) is an active-site residue.

The protein belongs to the peptidase S1 family. Snake venom subfamily. As to expression, expressed by the venom gland (at protein level). Expressed by the venom gland.

It localises to the secreted. Its activity is regulated as follows. The hydrolysis of TAMe (tosyl-arginine methyl ester) substrate is activated by Ca(2+), Fe(3+), Mg(2+) and Zn(2+), and inhibited by EDTA, PMSF and DTT. Its function is as follows. Thrombin-like enzyme that shows fibrinogenolytic activity against bovine fibrinogen alpha and beta chains, but not gamma chain. Hydrolyzes fibrin. Enhances ADP-induced human platelet aggregation. Has arginine esterase activity for TAMe (tosyl-arginine methyl ester) substrate. Reduces thrombin-induced thrombosis. Does not have hemorrhagic activity. Reduces the motility of human liver cancer HepG2 cells in a wound-healing assay. The protein is Thrombin-like enzyme agkihpin-2 of Gloydius halys (Chinese water mocassin).